The sequence spans 216 residues: Probable GTP-binding protein EngB (216 aa).

An EngB-type G domain is found at 24 to 205 (QTPELAFVGR…WARIASAATD (182 aa)). GTP-binding positions include 32-39 (GRSNVGKS), 59-63 (GRTRA), 86-89 (DLPG), 153-156 (TKMD), and 184-186 (FSA). Residues serine 39 and threonine 61 each coordinate Mg(2+).

The protein belongs to the TRAFAC class TrmE-Era-EngA-EngB-Septin-like GTPase superfamily. EngB GTPase family. The cofactor is Mg(2+).

Functionally, necessary for normal cell division and for the maintenance of normal septation. This is Probable GTP-binding protein EngB from Anaeromyxobacter sp. (strain Fw109-5).